A 144-amino-acid polypeptide reads, in one-letter code: UPF0102 protein BPSL3274 (144 aa).

The tract at residues 1-28 (MCHAREASPGTGEPEAAPRDNFPREAGS) is disordered. Over residues 16–28 (AAPRDNFPREAGS) the composition is skewed to basic and acidic residues.

The protein belongs to the UPF0102 family.

The sequence is that of UPF0102 protein BPSL3274 from Burkholderia pseudomallei (strain K96243).